Here is a 315-residue protein sequence, read N- to C-terminus: Ankyrin repeat domain-containing protein 54 (315 aa).

Residues 1 to 49 (MDGSSPLLAAAGSDGDRSSSEGEYTLAGGPSAGDTEKREGESPMEAAGA) form a disordered region. ANK repeat units lie at residues 124 to 153 (HAVK…DPCA), 157 to 186 (KGRT…DPNQ), 190 to 219 (LGNT…RVDA), and 223 to 255 (AGRT…EVTQ).

The protein resides in the nucleus. The protein localises to the cytoplasm. It localises to the midbody. In terms of biological role, plays an important role in regulating intracellular signaling events associated with erythroid terminal differentiation. The protein is Ankyrin repeat domain-containing protein 54 (ankrd54) of Danio rerio (Zebrafish).